Here is a 585-residue protein sequence, read N- to C-terminus: Aspartate--tRNA(Asp/Asn) ligase (585 aa).

Glu175 serves as a coordination point for L-aspartate. The segment at 199-202 is aspartate; sequence QLFK. L-aspartate is bound at residue Arg221. Residues 221-223 and Gln230 each bind ATP; that span reads RDE. His448 lines the L-aspartate pocket. ATP is bound at residue Glu482. Arg489 serves as a coordination point for L-aspartate. 534 to 537 is an ATP binding site; sequence GLDR.

The protein belongs to the class-II aminoacyl-tRNA synthetase family. Type 1 subfamily. As to quaternary structure, homodimer.

The protein resides in the cytoplasm. It carries out the reaction tRNA(Asx) + L-aspartate + ATP = L-aspartyl-tRNA(Asx) + AMP + diphosphate. In terms of biological role, aspartyl-tRNA synthetase with relaxed tRNA specificity since it is able to aspartylate not only its cognate tRNA(Asp) but also tRNA(Asn). Reaction proceeds in two steps: L-aspartate is first activated by ATP to form Asp-AMP and then transferred to the acceptor end of tRNA(Asp/Asn). The polypeptide is Aspartate--tRNA(Asp/Asn) ligase (Natranaerobius thermophilus (strain ATCC BAA-1301 / DSM 18059 / JW/NM-WN-LF)).